The primary structure comprises 528 residues: OLD nuclease (528 aa).

The ATPase domain N-terminus stretch occupies residues 1 to 153 (MLKRLQVKNF…LAQHLPSIRG (153 aa)). 31-35 (GAGKT) lines the ATP pocket. Residues 154–245 (SILGRLLQPV…RESDLTLPGD (92 aa)) are dimerization domain. The segment at 246-369 (ELGLGIQSAI…FDTARNEVLF (124 aa)) is ATPase domain C-terminus. The toprim domain stretch occupies residues 370-528 (AKRALLVEGY…IRQVTRPMEE (159 aa)). Residues glutamate 377, aspartate 381, aspartate 431, and aspartate 433 each coordinate a divalent metal cation. The segment at 440-461 (RADEETRRKQEQENKAEQEKNQ) is disordered. A divalent metal cation contacts are provided by serine 478 and glutamate 480. Arginine 487 serves as the catalytic Stabilizes transition state or protonates leaving group.

This sequence belongs to the class 1 OLD nuclease family. As to quaternary structure, homodimer. The cofactor is Mg(2+). Mn(2+) is required as a cofactor. Requires Ca(2+) as cofactor.

It catalyses the reaction Exonucleolytic cleavage in the 5'- to 3'-direction to yield nucleoside 5'-phosphates.. Its function is as follows. An exodeoxyribonuclease that degrades linear or supercoiled dsDNA from 5'-3'. Nicks and linearizes circular DNA. Activity is not stimulated by ATP or AMP-PNP, although it has DNA-stimulated ATPase activity. This Thermus scotoductus (strain ATCC 700910 / SA-01) protein is OLD nuclease.